A 400-amino-acid chain; its full sequence is Tryptophan synthase beta chain (400 aa).

Lysine 90 is modified (N6-(pyridoxal phosphate)lysine).

It belongs to the TrpB family. Tetramer of two alpha and two beta chains. The cofactor is pyridoxal 5'-phosphate.

The enzyme catalyses (1S,2R)-1-C-(indol-3-yl)glycerol 3-phosphate + L-serine = D-glyceraldehyde 3-phosphate + L-tryptophan + H2O. It participates in amino-acid biosynthesis; L-tryptophan biosynthesis; L-tryptophan from chorismate: step 5/5. Its function is as follows. The beta subunit is responsible for the synthesis of L-tryptophan from indole and L-serine. The protein is Tryptophan synthase beta chain of Alkaliphilus metalliredigens (strain QYMF).